Consider the following 170-residue polypeptide: Copper transporter 1 (170 aa).

The segment at 1–29 (MDHDHMHGMPRPSSSSSSSPSSMMNNGSM) is disordered. The span at 9–29 (MPRPSSSSSSSPSSMMNNGSM) shows a compositional bias: low complexity. 2 helical membrane-spanning segments follow: residues 65 to 85 (GMYA…EWLA) and 114 to 134 (IGLA…VFLV).

The protein belongs to the copper transporter (Ctr) (TC 1.A.56) family. SLC31A subfamily. As to expression, expressed in the root apex, lateral root primordia, embryo, trichomes, guard cells and pollen grains.

Its subcellular location is the membrane. Functionally, copper transporter involved in copper acquisition and transport in leaves. Required for copper homeostasis and normal plant growth and development. This Arabidopsis thaliana (Mouse-ear cress) protein is Copper transporter 1 (COPT1).